A 490-amino-acid chain; its full sequence is Glutamyl-tRNA(Gln) amidotransferase subunit A (490 aa).

Active-site charge relay system residues include lysine 77 and serine 152. Serine 176 acts as the Acyl-ester intermediate in catalysis.

It belongs to the amidase family. GatA subfamily. As to quaternary structure, heterotrimer of A, B and C subunits.

The catalysed reaction is L-glutamyl-tRNA(Gln) + L-glutamine + ATP + H2O = L-glutaminyl-tRNA(Gln) + L-glutamate + ADP + phosphate + H(+). Its function is as follows. Allows the formation of correctly charged Gln-tRNA(Gln) through the transamidation of misacylated Glu-tRNA(Gln) in organisms which lack glutaminyl-tRNA synthetase. The reaction takes place in the presence of glutamine and ATP through an activated gamma-phospho-Glu-tRNA(Gln). This Limosilactobacillus reuteri (strain DSM 20016) (Lactobacillus reuteri) protein is Glutamyl-tRNA(Gln) amidotransferase subunit A.